Here is a 57-residue protein sequence, read N- to C-terminus: UPF0391 membrane protein azo1765 (57 aa).

The next 2 membrane-spanning stretches (helical) occupy residues 1 to 21 and 33 to 53; these read MIKW…FGFT and VLFF…VGLG.

Belongs to the UPF0391 family.

It localises to the cell membrane. The chain is UPF0391 membrane protein azo1765 from Azoarcus sp. (strain BH72).